The primary structure comprises 139 residues: Acidic phospholipase A2 BpPLA2-TXI (139 aa).

The signal sequence occupies residues 1–16 (MRTLWIMAVLLVGVEG). Cys44 and Cys60 are disulfide-bonded. The Ca(2+) site is built by Gly45 and Gly47. His63 is a catalytic residue. Asp64 lines the Ca(2+) pocket. 3 disulfides stabilise this stretch: Cys65–Cys139, Cys73–Cys97, and Cys91–Cys102.

It belongs to the phospholipase A2 family. Group II subfamily. D49 sub-subfamily. Requires Ca(2+) as cofactor. As to expression, expressed by the venom gland.

It localises to the secreted. The catalysed reaction is a 1,2-diacyl-sn-glycero-3-phosphocholine + H2O = a 1-acyl-sn-glycero-3-phosphocholine + a fatty acid + H(+). PLA2 catalyzes the calcium-dependent hydrolysis of the 2-acyl groups in 3-sn-phosphoglycerides. This is Acidic phospholipase A2 BpPLA2-TXI from Bothrops pauloensis (Neuwied's lancehead).